Here is a 240-residue protein sequence, read N- to C-terminus: Endonuclease NucS 1 (240 aa).

The protein belongs to the NucS endonuclease family.

Its subcellular location is the cytoplasm. Its function is as follows. Cleaves both 3' and 5' ssDNA extremities of branched DNA structures. The protein is Endonuclease NucS 1 of Halobacterium salinarum (strain ATCC 700922 / JCM 11081 / NRC-1) (Halobacterium halobium).